The primary structure comprises 106 residues: MGKLTLLLLALLGWLQYSLWLGKNGVHDYVRVNDDVAVQQGSNAKLKARNDQLFAEIDDLNGGQEAIEERARNELSMIKPGETFYRLVPDQSRRNAASSSQNNLQK.

At methionine 1 to lysine 3 the chain is on the cytoplasmic side. The chain crosses the membrane as a helical span at residues leucine 4–leucine 21. The Periplasmic segment spans residues glycine 22–lysine 106. A coiled-coil region spans residues glutamine 40–glycine 62.

The protein belongs to the FtsB family. As to quaternary structure, part of a complex composed of FtsB, FtsL and FtsQ.

Its subcellular location is the cell inner membrane. Essential cell division protein. May link together the upstream cell division proteins, which are predominantly cytoplasmic, with the downstream cell division proteins, which are predominantly periplasmic. The polypeptide is Cell division protein FtsB (Serratia proteamaculans (strain 568)).